We begin with the raw amino-acid sequence, 249 residues long: Metallo-beta-lactamase type 2 (249 aa).

Positions 1 to 22 (MLKRLKGLLVLALGFTGLQVFG) are cleaved as a signal peptide. 5 residues coordinate Zn(2+): H98, H100, D102, H161, and C180. A substrate-binding site is contributed by K183. Residue H222 coordinates Zn(2+).

Belongs to the metallo-beta-lactamase superfamily. Class-B beta-lactamase family. Monomer. Zn(2+) serves as cofactor.

The protein resides in the periplasm. The catalysed reaction is a beta-lactam + H2O = a substituted beta-amino acid. Functionally, confers resistance to the different beta-lactams antibiotics (penicillin, cephalosporin and carbapenem) via the hydrolysis of the beta-lactam ring. This Elizabethkingia meningoseptica (Chryseobacterium meningosepticum) protein is Metallo-beta-lactamase type 2 (blaB5).